The chain runs to 469 residues: Rubisco accumulation factor 1, chloroplastic (469 aa).

The transit peptide at 1–46 (MLSLSHPHPHPASTTAAAAARHHHRRNAPFAPHHRRRRRFAHLTTS) directs the protein to the chloroplast. The tract at residues 1 to 78 (MLSLSHPHPH…TPPPTAPPDQ (78 aa)) is disordered. A compositionally biased stretch (basic residues) spans 20 to 41 (ARHHHRRNAPFAPHHRRRRRFA). Residues 90-281 (LPDKYKDLDL…PARARVEAEL (192 aa)) are N-terminal alpha-helix. The stretch at 246–294 (RQSREAIDAEDSVAELERALEVVDTEPARARVEAELDRARRKAAGEEVD) forms a coiled coil. Residues 311 to 456 (VPVVRLMYGE…AEVLVVVRPP (146 aa)) form a C-terminal beta sheet region.

This sequence belongs to the RAF family.

The protein resides in the plastid. The protein localises to the chloroplast. Functionally, required for assembly or stability of RuBisCO. Acts at a postchaperonin step to fold and/or assemble the large subunit (LS) into RuBisCO. In Oryza sativa subsp. japonica (Rice), this protein is Rubisco accumulation factor 1, chloroplastic (RAF1).